The primary structure comprises 419 residues: UDP-N-acetylglucosamine 1-carboxyvinyltransferase (419 aa).

23 to 24 lines the phosphoenolpyruvate pocket; sequence KN. Position 92 (R92) interacts with UDP-N-acetyl-alpha-D-glucosamine. Catalysis depends on C116, which acts as the Proton donor. C116 carries the 2-(S-cysteinyl)pyruvic acid O-phosphothioketal modification. Residues 121–125, 161–164, D306, and I328 each bind UDP-N-acetyl-alpha-D-glucosamine; these read RPVDL and KVSV.

It belongs to the EPSP synthase family. MurA subfamily.

Its subcellular location is the cytoplasm. The enzyme catalyses phosphoenolpyruvate + UDP-N-acetyl-alpha-D-glucosamine = UDP-N-acetyl-3-O-(1-carboxyvinyl)-alpha-D-glucosamine + phosphate. It participates in cell wall biogenesis; peptidoglycan biosynthesis. Cell wall formation. Adds enolpyruvyl to UDP-N-acetylglucosamine. This chain is UDP-N-acetylglucosamine 1-carboxyvinyltransferase, found in Vibrio cholerae serotype O1 (strain ATCC 39541 / Classical Ogawa 395 / O395).